Here is a 355-residue protein sequence, read N- to C-terminus: Methylxanthine N3-demethylase NdmB (355 aa).

Residues 19–131 (WHPVCTLNEF…CEVKYDIVWV (113 aa)) form the Rieske domain. [2Fe-2S] cluster-binding residues include Cys-64, His-66, Cys-87, and His-90.

[2Fe-2S] cluster serves as cofactor.

The enzyme catalyses theobromine + NADH + O2 + H(+) = 7-methylxanthine + formaldehyde + NAD(+) + H2O. It catalyses the reaction theobromine + NADPH + O2 + H(+) = 7-methylxanthine + formaldehyde + NADP(+) + H2O. It carries out the reaction 3-methylxanthine + NADH + O2 + H(+) = xanthine + formaldehyde + NAD(+) + H2O. The catalysed reaction is 3-methylxanthine + NADPH + O2 + H(+) = xanthine + formaldehyde + NADP(+) + H2O. Involved in the caffeine degradation, which is the essential first step for assimilating the carbon and nitrogen in caffeine. Catalyzes the N3-demethylation of theobromine to produce 7-methylxanthine and formaldehyde. Also catalyzes the N3-demethylation of 3-methylxanthine, caffeine, and theophylline to xanthine, paraxanthine, and 1-methylxanthine, respectively. NADH is the preferred substrate. In Pseudomonas putida (Arthrobacter siderocapsulatus), this protein is Methylxanthine N3-demethylase NdmB (ndmB).